The chain runs to 351 residues: Cytoplasmic dynein 2 light intermediate chain 1 (351 aa).

The disordered stretch occupies residues 303-335; it reads GTLKAVQDPARDPQYAESEVDEMRVQKDQELEH. Residues 323-335 are compositionally biased toward basic and acidic residues; that stretch reads DEMRVQKDQELEH.

Belongs to the dynein light intermediate chain family. In terms of assembly, light intermediate chain of the cytoplasmic dynein complex 2, a multisubunit complex composed at least of eleven different proteins. The cytoplasmic dynein 2 complex consists of two catalytic heavy chains (HCs) and a number of non-catalytic subunits presented by intermediate chains (ICs), light intermediate chains (LICs) and light chains (LCs). Among them, a heavy chain (DYNC2H1), two intermediate chains (DYNC2I2 and DYNC2I1), a light intermediate chain (DYNC2LI1), and a light chain (DYNLT2B) are unique to the dynein-2 complex, but a subset of light chains are also shared by dynein-1 and dynein-2 complexes. Dynein-2 complex is built around two copies of cytoplasmic dynein 2 heavy chain 1 (DYNC2H1). The C-terminal region forms the motor domain, which converts the energy from ATP hydrolysis into movement. Its N-terminal region forms the tail, an extended structure that binds the other subunits and holds the two heavy chains in a homodimer. Interacts with DYNC2H1 (via N-terminus); this interaction stabilizes the dynein-2 complex structure. In terms of tissue distribution, specifically expressed by ciliated cells in brain, lung, spleen, testis and kidney (at protein level). Enriched in the ependymal layer lining the lateral ventricles (at protein level).

Its subcellular location is the cytoplasm. It localises to the cell projection. It is found in the cilium. The protein resides in the cytoskeleton. The protein localises to the cilium basal body. Its subcellular location is the cilium axoneme. It localises to the microtubule organizing center. It is found in the centrosome. Acts as one of several non-catalytic accessory components of the cytoplasmic dynein 2 complex (dynein-2 complex), a motor protein complex that drives the movement of cargos along microtubules within cilia and flagella in concert with the intraflagellar transport (IFT) system, facilitating the assembly of these organelles. Involved in the regulation of ciliary length. This Mus musculus (Mouse) protein is Cytoplasmic dynein 2 light intermediate chain 1 (Dync2li1).